The following is a 352-amino-acid chain: F-box/kelch-repeat protein At1g57790 (352 aa).

The 47-residue stretch at K10–S56 folds into the F-box domain. Kelch repeat units follow at residues V148–V189 and V190–G234.

The polypeptide is F-box/kelch-repeat protein At1g57790 (Arabidopsis thaliana (Mouse-ear cress)).